Reading from the N-terminus, the 66-residue chain is MNKTFFLVVIMATVLVLAFDATDAQTNVRCTNTRDCFSFCSQFTNVHPACLGDYCECLRWEGGISI.

Residues 1-24 (MNKTFFLVVIMATVLVLAFDATDA) form the signal peptide. 3 cysteine pairs are disulfide-bonded: C30-C50, C36-C55, and C40-C57.

The protein belongs to the short scorpion toxin superfamily. Potassium channel inhibitor family. Alpha-KTx 30 subfamily. As to expression, expressed by the venom gland.

The protein resides in the secreted. Inhibits Kv1.3/KCNA3 channel. This chain is Potassium channel toxin alpha-KTx 30.3, found in Scorpiops jendeki (Scorpion).